Here is a 274-residue protein sequence, read N- to C-terminus: 2,3,4,5-tetrahydropyridine-2,6-dicarboxylate N-succinyltransferase (274 aa).

It belongs to the transferase hexapeptide repeat family.

It is found in the cytoplasm. It carries out the reaction (S)-2,3,4,5-tetrahydrodipicolinate + succinyl-CoA + H2O = (S)-2-succinylamino-6-oxoheptanedioate + CoA. It participates in amino-acid biosynthesis; L-lysine biosynthesis via DAP pathway; LL-2,6-diaminopimelate from (S)-tetrahydrodipicolinate (succinylase route): step 1/3. This chain is 2,3,4,5-tetrahydropyridine-2,6-dicarboxylate N-succinyltransferase, found in Yersinia pseudotuberculosis serotype IB (strain PB1/+).